A 571-amino-acid chain; its full sequence is Putative diflavin flavoprotein A 1 (571 aa).

Residues 43 to 236 (ENGTTYNSFL…PPVQLVATGH (194 aa)) are zinc metallo-hydrolase. Residues His-92, Glu-94, Asp-96, His-159, Asp-178, and His-236 each contribute to the Fe cation site. One can recognise a Flavodoxin-like domain in the interval 265-426 (VAIFYAANYG…DLDKALGRLS (162 aa)). The flavodoxin-reductase-like stretch occupies residues 427-571 (GGLYIITAQK…VHHRKVGNHY (145 aa)).

It in the N-terminal section; belongs to the zinc metallo-hydrolase group 3 family. In the C-terminal section; belongs to the flavodoxin reductase family. Requires Fe cation as cofactor.

Mediates electron transfer from NADH to oxygen, reducing it to water. This modular protein has 3 redox cofactors, in other organisms the same activity requires 2 or 3 proteins. The polypeptide is Putative diflavin flavoprotein A 1 (dfa1) (Thermosynechococcus vestitus (strain NIES-2133 / IAM M-273 / BP-1)).